We begin with the raw amino-acid sequence, 248 residues long: Protein GrpE (248 aa).

The disordered stretch occupies residues 229–248 (AAPKEDTLPAQENQSSPADS). A compositionally biased stretch (polar residues) spans 238 to 248 (AQENQSSPADS).

Belongs to the GrpE family. In terms of assembly, homodimer.

The protein localises to the cytoplasm. Functionally, participates actively in the response to hyperosmotic and heat shock by preventing the aggregation of stress-denatured proteins, in association with DnaK and GrpE. It is the nucleotide exchange factor for DnaK and may function as a thermosensor. Unfolded proteins bind initially to DnaJ; upon interaction with the DnaJ-bound protein, DnaK hydrolyzes its bound ATP, resulting in the formation of a stable complex. GrpE releases ADP from DnaK; ATP binding to DnaK triggers the release of the substrate protein, thus completing the reaction cycle. Several rounds of ATP-dependent interactions between DnaJ, DnaK and GrpE are required for fully efficient folding. This Trichormus variabilis (strain ATCC 29413 / PCC 7937) (Anabaena variabilis) protein is Protein GrpE.